Consider the following 591-residue polypeptide: Cytidine monophosphate-N-acetylneuraminic acid hydroxylase (591 aa).

The region spanning 12 to 110 (LEAEDVRNLK…AVLSETDGSL (99 aa)) is the Rieske domain. 4 residues coordinate [2Fe-2S] cluster: cysteine 52, histidine 54, cysteine 73, and histidine 76.

This sequence belongs to the CMP-Neu5Ac hydroxylase family. It depends on [2Fe-2S] cluster as a cofactor.

It localises to the cytoplasm. It carries out the reaction CMP-N-acetyl-beta-neuraminate + 2 Fe(II)-[cytochrome b5] + O2 + 2 H(+) = CMP-N-glycoloyl-beta-neuraminate + 2 Fe(III)-[cytochrome b5] + H2O. It participates in amino-sugar metabolism; N-acetylneuraminate metabolism. Functionally, sialic acids are components of carbohydrate chains of glycoconjugates and are involved in cell-cell recognition and cell-pathogen interactions. Catalyzes the conversion of CMP-N-acetylneuraminic acid (CMP-Neu5Ac) into its hydroxylated derivative CMP-N-glycolylneuraminic acid (CMP-Neu5Gc), a sialic acid abundantly expressed at the surface of many cells. In Danio rerio (Zebrafish), this protein is Cytidine monophosphate-N-acetylneuraminic acid hydroxylase (cmah).